Consider the following 400-residue polypeptide: Beta-ketoadipyl-CoA thiolase (400 aa).

The Acyl-thioester intermediate role is filled by C90. Residues H356 and C386 each act as proton acceptor in the active site.

It belongs to the thiolase-like superfamily. Thiolase family.

The catalysed reaction is succinyl-CoA + acetyl-CoA = 3-oxoadipyl-CoA + CoA. The protein operates within aromatic compound metabolism; beta-ketoadipate pathway; acetyl-CoA and succinyl-CoA from 3-oxoadipate: step 2/2. Catalyzes thiolytic cleavage of beta-ketoadipyl-CoA to succinyl-CoA and acetyl-CoA. This Pseudomonas putida (Arthrobacter siderocapsulatus) protein is Beta-ketoadipyl-CoA thiolase (pcaF).